Consider the following 324-residue polypeptide: Homoserine kinase (324 aa).

Pro87–Ala97 provides a ligand contact to ATP.

The protein belongs to the GHMP kinase family. Homoserine kinase subfamily.

It is found in the cytoplasm. It carries out the reaction L-homoserine + ATP = O-phospho-L-homoserine + ADP + H(+). It participates in amino-acid biosynthesis; L-threonine biosynthesis; L-threonine from L-aspartate: step 4/5. Its function is as follows. Catalyzes the ATP-dependent phosphorylation of L-homoserine to L-homoserine phosphate. The sequence is that of Homoserine kinase from Symbiobacterium thermophilum (strain DSM 24528 / JCM 14929 / IAM 14863 / T).